The primary structure comprises 246 residues: Ribosome maturation factor RimM (246 aa).

Residues 1–15 are compositionally biased toward basic and acidic residues; sequence MKRKQESKGAGEKRQ. The segment at 1–63 is disordered; the sequence is MKRKQESKGA…NPQFTTPNPD (63 aa). A compositionally biased stretch (pro residues) spans 45-54; that stretch reads VPSPQSPIPN. The 82-residue stretch at 158-239 folds into the PRC barrel domain; sequence GEDEYHVVDL…RIEITPPPGL (82 aa).

It belongs to the RimM family. As to quaternary structure, binds ribosomal protein uS19.

Its subcellular location is the cytoplasm. An accessory protein needed during the final step in the assembly of 30S ribosomal subunit, possibly for assembly of the head region. Essential for efficient processing of 16S rRNA. May be needed both before and after RbfA during the maturation of 16S rRNA. It has affinity for free ribosomal 30S subunits but not for 70S ribosomes. This is Ribosome maturation factor RimM from Nostoc sp. (strain PCC 7120 / SAG 25.82 / UTEX 2576).